Consider the following 370-residue polypeptide: Phospho-N-acetylmuramoyl-pentapeptide-transferase (370 aa).

The next 10 helical transmembrane spans lie at 24 to 44 (YLTF…VAMG), 78 to 98 (TMGG…WADL), 103 to 123 (VWVV…DDYA), 138 to 158 (KLVA…LFAP), 177 to 197 (ALVI…IAGF), 209 to 229 (GLAI…AYLV), 245 to 265 (GVGE…GFLW), 273 to 293 (IFMG…IAVC), 298 to 318 (LVLG…MIQV), and 347 to 367 (TVVI…LATL).

This sequence belongs to the glycosyltransferase 4 family. MraY subfamily. Mg(2+) serves as cofactor.

It is found in the cell inner membrane. It catalyses the reaction UDP-N-acetyl-alpha-D-muramoyl-L-alanyl-gamma-D-glutamyl-meso-2,6-diaminopimeloyl-D-alanyl-D-alanine + di-trans,octa-cis-undecaprenyl phosphate = di-trans,octa-cis-undecaprenyl diphospho-N-acetyl-alpha-D-muramoyl-L-alanyl-D-glutamyl-meso-2,6-diaminopimeloyl-D-alanyl-D-alanine + UMP. It functions in the pathway cell wall biogenesis; peptidoglycan biosynthesis. Functionally, catalyzes the initial step of the lipid cycle reactions in the biosynthesis of the cell wall peptidoglycan: transfers peptidoglycan precursor phospho-MurNAc-pentapeptide from UDP-MurNAc-pentapeptide onto the lipid carrier undecaprenyl phosphate, yielding undecaprenyl-pyrophosphoryl-MurNAc-pentapeptide, known as lipid I. This is Phospho-N-acetylmuramoyl-pentapeptide-transferase from Caulobacter vibrioides (strain NA1000 / CB15N) (Caulobacter crescentus).